The following is a 360-amino-acid chain: Spore germination protein GerQB (360 aa).

10 helical membrane-spanning segments follow: residues 11–31 (SPYM…MLGF), 45–65 (ISTL…YQIL), 84–104 (IGGL…ATTL), 116–136 (FPSI…YYIV), 142–162 (VVAG…FTFF), 188–208 (MKGN…YPFI), 220–240 (YANL…LAFF), 270–290 (IIVS…LWGV), 300–320 (IKQK…SFFL), and 331–351 (TWTG…LWLI).

The protein belongs to the amino acid-polyamine-organocation (APC) superfamily. Spore germination protein (SGP) (TC 2.A.3.9) family.

Its subcellular location is the membrane. In terms of biological role, required for the germination response to inosine. Has no role in L-alanine germination. The sequence is that of Spore germination protein GerQB (gerQB) from Bacillus cereus.